A 244-amino-acid polypeptide reads, in one-letter code: Ribosomal RNA small subunit methyltransferase NEP1 (244 aa).

The tract at residues 1–34 is disordered; sequence MAAPSDGFKPRERSGGEQAQDWDALPPKRPRLGA. At A2 the chain carries N-acetylalanine. S5 and S14 each carry phosphoserine. S-adenosyl-L-methionine contacts are provided by residues T176, G201, G206, and 219–224; that span reads ISNYPL.

Belongs to the class IV-like SAM-binding methyltransferase superfamily. RNA methyltransferase NEP1 family. Homodimer. Part of the small subunit (SSU) processome, composed of more than 70 proteins and the RNA chaperone small nucleolar RNA (snoRNA) U3.

It localises to the nucleus. Its subcellular location is the nucleolus. The enzyme catalyses pseudouridine(1248) in human 18S rRNA + S-adenosyl-L-methionine = N(1)-methylpseudouridine(1248) in human 18S rRNA + S-adenosyl-L-homocysteine + H(+). In terms of biological role, S-adenosyl-L-methionine-dependent pseudouridine N(1)-methyltransferase that methylates pseudouridine at position 1248 (Psi1248) in 18S rRNA. Involved the biosynthesis of the hypermodified N1-methyl-N3-(3-amino-3-carboxypropyl) pseudouridine (m1acp3-Psi) conserved in eukaryotic 18S rRNA. Is not able to methylate uridine at this position. Also has an essential role in 40S ribosomal subunit biogenesis independent on its methyltransferase activity, facilitating the incorporation of ribosomal protein S19 during the formation of pre-ribosomes. Part of the small subunit (SSU) processome, first precursor of the small eukaryotic ribosomal subunit. During the assembly of the SSU processome in the nucleolus, many ribosome biogenesis factors, an RNA chaperone and ribosomal proteins associate with the nascent pre-rRNA and work in concert to generate RNA folding, modifications, rearrangements and cleavage as well as targeted degradation of pre-ribosomal RNA by the RNA exosome. This chain is Ribosomal RNA small subunit methyltransferase NEP1, found in Homo sapiens (Human).